A 163-amino-acid chain; its full sequence is Nucleotide-binding protein GTNG_0630 (163 aa).

It belongs to the YajQ family.

In terms of biological role, nucleotide-binding protein. This Geobacillus thermodenitrificans (strain NG80-2) protein is Nucleotide-binding protein GTNG_0630.